Here is a 604-residue protein sequence, read N- to C-terminus: Putative sodium-dependent multivitamin transporter (604 aa).

A run of 6 helical transmembrane segments spans residues 4 to 24 (LGAW…AIGI), 48 to 68 (VAPV…ILGV), 78 to 98 (MFVV…YLII), 134 to 154 (VLYM…VTGL), 160 to 180 (IVIV…KAVL), and 188 to 208 (LLMF…AGSL). N-linked (GlcNAc...) asparagine glycosylation is found at N222 and N225. 7 consecutive transmembrane segments (helical) span residues 234-254 (HTWF…YGVN), 273-293 (ALWW…FSGL), 331-351 (LAGL…SSII), 389-409 (LFFG…GGLL), 413-433 (LSIF…GMYV), 440-460 (GAIG…FGQP), and 511-531 (ALGF…FALL).

It belongs to the sodium:solute symporter (SSF) (TC 2.A.21) family.

It is found in the cell membrane. The polypeptide is Putative sodium-dependent multivitamin transporter (Drosophila melanogaster (Fruit fly)).